A 604-amino-acid chain; its full sequence is Kelch-like protein 15 (604 aa).

Positions leucine 31–methionine 98 constitute a BTB domain. In terms of domain architecture, BACK spans cysteine 133–lysine 237. Kelch repeat units lie at residues phenylalanine 328–lysine 379, isoleucine 381–asparagine 426, leucine 428–lysine 473, lysine 489–lysine 542, and isoleucine 544–leucine 590.

Homodimer. Dimerization does not affect PPP2R5B-binding, but is required for its proteasomal degradation. Interacts with CUL3. Directly interacts with PPP2R5B; this interaction leads to PPP2R5B proteasomal degradation. Interacts with RBBP8/CtIP; this interaction leads to RBBP8 proteasomal degradation. Interacts with PACMP micropeptide; interaction prevents ubiquitination and degradation of RBBP8/CtIP.

It is found in the nucleus. It participates in protein modification; protein ubiquitination. Its function is as follows. Substrate-specific adapter for CUL3 E3 ubiquitin-protein ligase complex. Acts as an adapter for CUL3 to target the serine/threonine-protein phosphatase 2A (PP2A) subunit PPP2R5B for ubiquitination and subsequent proteasomal degradation, thus promoting exchange with other regulatory subunits and regulating PP2A holoenzyme composition. Acts as an adapter for CUL3 to target the DNA-end resection factor RBBP8/CtIP for ubiquitination and subsequent proteasomal degradation. Through the regulation of RBBP8/CtIP protein turnover, plays a key role in DNA damage response, favoring DNA double-strand repair through error-prone non-homologous end joining (NHEJ) over error-free, RBBP8-mediated homologous recombination (HR). In Mus musculus (Mouse), this protein is Kelch-like protein 15 (Klhl15).